The sequence spans 375 residues: Lipid droplet hydrolase 1 (375 aa).

In terms of domain architecture, AB hydrolase-1 spans 88-358; the sequence is VFVFVPGLAG…CSHNLCFDRP (271 aa). The active-site Charge relay system is S177. Positions 373–375 match the Microbody targeting signal motif; the sequence is SKL.

It belongs to the AB hydrolase superfamily. Lipase family.

The protein localises to the lipid droplet. It catalyses the reaction a triacylglycerol + H2O = a diacylglycerol + a fatty acid + H(+). Serine hydrolase required for the maintenance of steady state level of non-polar and polar lipids of lipid droplets and thus plays a role in maintaining the lipids homeostasis. Exhibits both esterase and triacylglycerol lipase activity. This chain is Lipid droplet hydrolase 1, found in Saccharomyces cerevisiae (strain ATCC 204508 / S288c) (Baker's yeast).